Consider the following 1393-residue polypeptide: MEDKNNIELQEKAPDNYNNNNNNNNNNNNNNNNNNNNNNNNNNNNNNDINNNDDDNNKIIYQNPTPASSSHIDSIEIDINYDLSNHIKQRVTQNKTGMFVSANNISYYIPKSIKKGESEELSKLYLLNNISFTMKPGRMILLMGIPGAGKSLLLKVLGNRLGKGKIEGELKFNNHEVDETTHQRDTIFVSQDDRHIALLTVRETLEFSAKCNMGENVSQEEQSERVDLVLDQLGLSHTSNTIIGNQFFRGISGGQKRRVTIANEFTKRSPNLILMDEPSTGLDSATSYNVISKVKTIAKEAKASVMVSLLQPSVELTNLFDDILILGEGGNLIYFGELNNLLPYFSSIGLAPLPNQPLAEFMQEVSVEPSKYMITDKIELSSKDGGDDESKSLLLGGADSGNVEKMDLVKLFKESELNQKTIQSMQQLIPSDIKVSDHLIKKLETGDNGKSSVRYELKHLLARHIKVMKIMKMQYAVRFFQAIFMGCVIGSLFVKMGFTQADARNRFGLVYFAMVLHIWTTIGSVEEFFTLRGIFDDQKDSKYYRNFPYFLSLVITKIPISLIEAILFSSCCYWIAGFQARVDNFIVFILGMALTNLIAQGIFQVTSAFTSAQLLASLICPAIVVLFMIMSGYMISRLQIPGWWIWLNALSPLRYVIDMVSSNELYGLEFHCSPMEKIPPSNYPLLNVSYADGGYQGNQICQYSTGSDFLNQFGFSDNSYMRWVDIVIILGFVCTFFFIFFLGVKYIRFENKKPPRQIKLKKKKEKKDKKDKEVKHKWNGCYMTFQNLNYVVPSVKDNKETGKKEKVTLELLKDVNGFIVPGMCALMGPSGAGKSTLMDVLAKRKNVGTITGDIRINGQLVKDMNITRFTGYVEQQDILSANLTVREAIEFSANCRLPSSYLQKDRVKLIDEILSVLSLTKMQNTTIGPNPTLGISLANRKKVSIGIELASDPHLIFLDEPTSGLDSSAALKVMNCVKKIAESGRTVVCTIHQPSQEIFEKFDQLLLLDKGKVIYFGDTGDNSSTVIQHFTSAGYQYEHGRNPADFILEIAEHPPSTGQSASDYFKSSIHYSNSIQRLESKTIVPEGVDVPKYKGKYSAPATAQLHSLVKRGWLNHVRRPQTILLRFLRSFIPAIVIGTLFLRLDNDQTGARNRIALVFLGFLFGGMASIGKVPTIVEDRSVYYRESSAGTYPAHLYILASVITDLPMMVLTAFSYWIPMFFLTGLTLGDHGWKFFFSLSVYLLVIMCYDSLATLFALTLPTIPIAILVSGVGLNFLGLFGGFFIPVNNIPRGWIWMHYLVFSKYGLETLSITELKGEPFFCEEDQYSIIPIAGTNFTKKYCAIQSGDTMLLQYGMNDAYDRQFYNLIILGGYFCAYTFLGYLALRFINHMKR.

The segment covering 1–14 (MEDKNNIELQEKAP) has biased composition (basic and acidic residues). A disordered region spans residues 1-68 (MEDKNNIELQ…IIYQNPTPAS (68 aa)). The segment covering 15–50 (DNYNNNNNNNNNNNNNNNNNNNNNNNNNNNNNNDIN) has biased composition (low complexity). The ABC transporter 1 domain maps to 100–353 (VSANNISYYI…YFSSIGLAPL (254 aa)). ATP is bound at residue 144-151 (GIPGAGKS). The 226-residue stretch at 473-698 (MQYAVRFFQA…SYADGGYQGN (226 aa)) folds into the ABC transmembrane type-2 1 domain. Helical transmembrane passes span 479-499 (FFQA…MGFT), 509-529 (LVYF…EEFF), 558-578 (IPIS…IAGF), 585-605 (FIVF…IFQV), 615-635 (LASL…GYMI), 640-660 (IPGW…IDMV), and 724-744 (VDIV…FLGV). In terms of domain architecture, ABC transporter 2 spans 783–1035 (MTFQNLNYVV…VIQHFTSAGY (253 aa)). 828–835 (GPSGAGKS) contributes to the ATP binding site. Residues 1121–1388 (QTILLRFLRS…FLGYLALRFI (268 aa)) form the ABC transmembrane type-2 2 domain. Helical transmembrane passes span 1122–1142 (TILL…TLFL), 1157–1177 (LVFL…PTIV), 1206–1226 (LPMM…LTGL), 1235–1255 (FFFS…LATL), 1265–1285 (IAIL…GFFI), and 1364–1384 (FYNL…GYLA).

Belongs to the ABC transporter superfamily. ABCG family. PDR (TC 3.A.1.205) subfamily.

It is found in the membrane. In Dictyostelium discoideum (Social amoeba), this protein is ABC transporter G family member 3 (abcG3).